The following is a 259-amino-acid chain: MELEQREGTMAAVGFEEFSAPPGSELALPPLFGGHILESELETEVEFVSGGLGDSGLRERDEEEEAARGRRRRQRELNRRKYQALGRRCREIEQVNERVLNRLHQVQRITRRLQQERRFLMRVLDSYGDDYRDSQFTIVLEDDGSQGTDVPTPGNAENEPPEKEGLSPSQRTTATLDPTSPAPGEGPSGRKRRRAPRVGASLTPELAPVQVGAEGWGQGVIKVEEDFGFEADEALDSSWVSREPDKLLPYPTLASPPFD.

2 disordered regions span residues 50–72 (GGLGDSGLRERDEEEEAARGRRR) and 141–210 (EDDG…APVQ). Position 167 is a phosphoserine (Ser-167). Residues 167-178 (SPSQRTTATLDP) show a composition bias toward polar residues. Residue Thr-172 is modified to Phosphothreonine. Phosphoserine occurs at positions 180 and 188. Thr-203 carries the post-translational modification Phosphothreonine. Residue Lys-222 forms a Glycyl lysine isopeptide (Lys-Gly) (interchain with G-Cter in SUMO2) linkage. Ser-255 bears the Phosphoserine mark.

Interacts with NOL3; translocates NOL3 into the nucleus and negatively regulated TFPT-induced cell death. Component of the chromatin remodeling INO80 complex; specifically part of a complex module associated with the N-terminus of INO80.

The protein resides in the nucleus. Its function is as follows. Appears to promote apoptosis in a p53/TP53-independent manner. In terms of biological role, putative regulatory component of the chromatin remodeling INO80 complex which is involved in transcriptional regulation, DNA replication and probably DNA repair. The chain is TCF3 fusion partner homolog (Tfpt) from Mus musculus (Mouse).